A 56-amino-acid chain; its full sequence is Large ribosomal subunit protein bL32 (56 aa).

Basic residues predominate over residues 1 to 16; sequence MAVQKSKKSRSRRGMR. The interval 1 to 38 is disordered; it reads MAVQKSKKSRSRRGMRRSHDAVTPENLSVDPVSGETHR.

It belongs to the bacterial ribosomal protein bL32 family.

In Colwellia psychrerythraea (strain 34H / ATCC BAA-681) (Vibrio psychroerythus), this protein is Large ribosomal subunit protein bL32.